The sequence spans 1061 residues: MSKVRINDLARELEVKSKAILDALADCGVTEKKTHSSSLEADEAVRVRAHFARGSRGAGQGGSRQQNEPKPKIDWSRVSKPGDVLKAIQERNEQETVAAARPAAVPVAPKAPVSAPPAARPSAPRPAVTAAPPPVAARPAGVQPGSQPAVSVQHGAEAQKPAPRRIVPQPRQPSAVVAPPPAATPAIAARPPAAPVAVKPPVTTAPIAQQEKPAAPAAQEVKSALATGPSVPVAVSPSVVVAAAPPPATAFQAPAAPAAPAASQSAPQEAKTPAAEAPPVAPEKPAVPAPPQRRVIMPQTGPRPVYTAPPPSASPVTPRPSGGGIQRGKPIFDRRPTGNSPGGPGGPGGGYGQRPSGPGGRRPMHPTRNQPGGGPPGGRPGFNNGPRPGFGQRPGGFGQRPGMGAPGLVPPPGDTPGRPQRPGAGQKRGGRSNQYPKSKEGPMKGFAPPSRFGGAQIPTEPLPITRTITVTEGISVKDLAEKLGVRGKDLIATLLMRGVFVTVNQSLDGELVKDVARQFGADTTVISFEDQMANEAFENLLSQENPDELELSRPPVVTVMGHVDHGKTSLLDAIRETDVAGGEAGGITQHIGAYKVRINKEDSPAFGREIVFLDTPGHEAFTRMRARGAKVTDIVVIVVAADDGVMPQTLEAVDHAKAANVPIIVAVNKIDKPEAQPDRVKKQLGDRGLVPEDWGGSTVFVDVSAKKRQNLDLLLEMICLVADLGNLKATPGRSAVGTVIEAKLDRGRGAVASVLVQNGTLRAQDSFIVGNTFGKIRAMFDDRGRAIEEAGPSTPVEILGLENMPDAGDTFLVVADRDKAKGIAQYRQMKEREVQLAKSSRVSLEGLAEQIKQAGMKELPLILKGDVTGSVEVLADSLQKMSTEKVRIKVIHSGVGAITESDVLLASASNAIIIGFNVKPDRKSADLAEQENVEIRLHTIIYELQEEITKAMLGLLDPVFKESYLGRAEVLNVFKIPKIGTIAGCRVLDGVLRRDSEIRLMRGGEQVFKGKLTSLKRFKDDAKEVTNGMECGVGLNTSDIQVGDTVEAFTMERVAAELTAQ.

Disordered regions lie at residues 51 to 199 (FARG…VAVK) and 250 to 460 (AFQA…IPTE). The span at 67–77 (NEPKPKIDWSR) shows a compositional bias: basic and acidic residues. Low complexity-rich tracts occupy residues 97-113 (VAAA…KAPV), 120-130 (RPSAPRPAVTA), 167-177 (VPQPRQPSAVV), 184-199 (TPAI…VAVK), and 250-278 (AFQA…AEAP). The segment covering 279–291 (PVAPEKPAVPAPP) has biased composition (pro residues). The segment covering 340–360 (SPGGPGGPGGGYGQRPSGPGG) has biased composition (gly residues). The segment covering 381–391 (GFNNGPRPGFG) has biased composition (low complexity). Positions 392–405 (QRPGGFGQRPGMGA) are enriched in gly residues. The tr-type G domain occupies 552-728 (SRPPVVTVMG…CLVADLGNLK (177 aa)). Residues 561–568 (GHVDHGKT) are G1. 561 to 568 (GHVDHGKT) lines the GTP pocket. The interval 586-590 (GITQH) is G2. Residues 614-617 (DTPG) form a G3 region. GTP-binding positions include 614-618 (DTPGH) and 668-671 (NKID). The G4 stretch occupies residues 668–671 (NKID). Positions 704-706 (SAK) are G5.

The protein belongs to the TRAFAC class translation factor GTPase superfamily. Classic translation factor GTPase family. IF-2 subfamily.

It is found in the cytoplasm. Its function is as follows. One of the essential components for the initiation of protein synthesis. Protects formylmethionyl-tRNA from spontaneous hydrolysis and promotes its binding to the 30S ribosomal subunits. Also involved in the hydrolysis of GTP during the formation of the 70S ribosomal complex. The chain is Translation initiation factor IF-2 from Acidobacterium capsulatum (strain ATCC 51196 / DSM 11244 / BCRC 80197 / JCM 7670 / NBRC 15755 / NCIMB 13165 / 161).